Reading from the N-terminus, the 97-residue chain is Co-chaperonin GroES (97 aa).

Belongs to the GroES chaperonin family. In terms of assembly, heptamer of 7 subunits arranged in a ring. Interacts with the chaperonin GroEL.

It localises to the cytoplasm. In terms of biological role, together with the chaperonin GroEL, plays an essential role in assisting protein folding. The GroEL-GroES system forms a nano-cage that allows encapsulation of the non-native substrate proteins and provides a physical environment optimized to promote and accelerate protein folding. GroES binds to the apical surface of the GroEL ring, thereby capping the opening of the GroEL channel. The chain is Co-chaperonin GroES from Pseudomonas fluorescens (strain Pf0-1).